A 108-amino-acid chain; its full sequence is Insulin-like peptide 17 (108 aa).

The signal sequence occupies residues methionine 1–alanine 19.

The protein belongs to the insulin family. As to expression, expressed in head neurons and the uterus.

It localises to the secreted. In terms of biological role, involved in the regulation of the larval diapause. In Caenorhabditis elegans, this protein is Insulin-like peptide 17.